The primary structure comprises 336 residues: Adenosine deaminase (336 aa).

H15 and H17 together coordinate Zn(2+). Substrate-binding residues include H17, D19, and G172. A Zn(2+)-binding site is contributed by H199. E202 functions as the Proton donor in the catalytic mechanism. D279 contacts Zn(2+).

It belongs to the metallo-dependent hydrolases superfamily. Adenosine and AMP deaminases family. Adenosine deaminase subfamily. Requires Zn(2+) as cofactor.

The enzyme catalyses adenosine + H2O + H(+) = inosine + NH4(+). The catalysed reaction is 2'-deoxyadenosine + H2O + H(+) = 2'-deoxyinosine + NH4(+). Functionally, catalyzes the hydrolytic deamination of adenosine and 2-deoxyadenosine. The chain is Adenosine deaminase from Streptococcus thermophilus (strain ATCC BAA-250 / LMG 18311).